We begin with the raw amino-acid sequence, 348 residues long: Flavonol synthase/flavanone 3-hydroxylase (348 aa).

Residues 209–309 form the Fe2OG dioxygenase domain; that stretch reads EIVYLLKINY…RMSWPVFLEP (101 aa). Histidine 234, aspartate 236, and histidine 290 together coordinate Fe cation.

The protein belongs to the iron/ascorbate-dependent oxidoreductase family. The cofactor is L-ascorbate. Fe cation is required as a cofactor.

The protein resides in the cytoplasm. It catalyses the reaction a (2R,3R)-dihydroflavonol + 2-oxoglutarate + O2 = a flavonol + succinate + CO2 + H2O. The catalysed reaction is a (2S)-flavan-4-one + 2-oxoglutarate + O2 = a (2R,3R)-dihydroflavonol + succinate + CO2. The protein operates within secondary metabolite biosynthesis; flavonoid biosynthesis. In terms of biological role, catalyzes the formation of flavonols from dihydroflavonols. It can act on dihydrokaempferol to produce kaempferol, on dihydroquercetin to produce quercitin and on dihydromyricetin to produce myricetin. This Petunia hybrida (Petunia) protein is Flavonol synthase/flavanone 3-hydroxylase (FL).